A 436-amino-acid polypeptide reads, in one-letter code: ATP-dependent RNA helicase RhlB (436 aa).

The short motif at 9-37 (QKFADFPLHKEVHQALNEAGFEFCTPIQA) is the Q motif element. The region spanning 40-219 (LPILLEKKDI…YDHMNEPEKV (180 aa)) is the Helicase ATP-binding domain. Residue 53–60 (AQTGTGKT) participates in ATP binding. The DEAD box motif lies at 165–168 (DEAD). A Helicase C-terminal domain is found at 243-390 (KMPLLLSLLE…VTSYDSDALL (148 aa)). Positions 392 to 436 (DIPPPVRIHRKPSTHTRNTRDRSSGRPQGGQRNGPRRHDKTRRHS) are disordered. The segment covering 425–436 (GPRRHDKTRRHS) has biased composition (basic residues).

This sequence belongs to the DEAD box helicase family. RhlB subfamily. As to quaternary structure, component of the RNA degradosome, which is a multiprotein complex involved in RNA processing and mRNA degradation.

It is found in the cytoplasm. It carries out the reaction ATP + H2O = ADP + phosphate + H(+). DEAD-box RNA helicase involved in RNA degradation. Has RNA-dependent ATPase activity and unwinds double-stranded RNA. This chain is ATP-dependent RNA helicase RhlB, found in Shewanella pealeana (strain ATCC 700345 / ANG-SQ1).